A 78-amino-acid polypeptide reads, in one-letter code: Acyl carrier protein (78 aa).

Residues 2–77 (SDTEERVKKI…DAVKFIDKAS (76 aa)) enclose the Carrier domain. Serine 37 carries the O-(pantetheine 4'-phosphoryl)serine modification.

This sequence belongs to the acyl carrier protein (ACP) family. In terms of processing, 4'-phosphopantetheine is transferred from CoA to a specific serine of apo-ACP by AcpS. This modification is essential for activity because fatty acids are bound in thioester linkage to the sulfhydryl of the prosthetic group.

It localises to the cytoplasm. It functions in the pathway lipid metabolism; fatty acid biosynthesis. In terms of biological role, carrier of the growing fatty acid chain in fatty acid biosynthesis. The chain is Acyl carrier protein from Bartonella bacilliformis (strain ATCC 35685 / KC583 / Herrer 020/F12,63).